Reading from the N-terminus, the 545-residue chain is Lysine--tRNA ligase (545 aa).

Positions 41-49 match the 'HIGH' region motif; sequence PSGVPHLGH. Residues 306-310 carry the 'KMSKS' region motif; that stretch reads ALSSS.

Belongs to the class-I aminoacyl-tRNA synthetase family.

It localises to the cytoplasm. It catalyses the reaction tRNA(Lys) + L-lysine + ATP = L-lysyl-tRNA(Lys) + AMP + diphosphate. This chain is Lysine--tRNA ligase, found in Natronomonas pharaonis (strain ATCC 35678 / DSM 2160 / CIP 103997 / JCM 8858 / NBRC 14720 / NCIMB 2260 / Gabara) (Halobacterium pharaonis).